The chain runs to 181 residues: Isopentenyl-diphosphate Delta-isomerase (181 aa).

Positions 29 and 36 each coordinate Mn(2+). Residues Pro34 to Glu167 enclose the Nudix hydrolase domain. Cys71 is an active-site residue. His73 serves as a coordination point for Mn(2+). Residue Glu91 coordinates Mg(2+). Positions 118 and 120 each coordinate Mn(2+). Glu120 is an active-site residue.

Belongs to the IPP isomerase type 1 family. Mg(2+) is required as a cofactor. Requires Mn(2+) as cofactor.

The protein localises to the cytoplasm. The enzyme catalyses isopentenyl diphosphate = dimethylallyl diphosphate. It functions in the pathway isoprenoid biosynthesis; dimethylallyl diphosphate biosynthesis; dimethylallyl diphosphate from isopentenyl diphosphate: step 1/1. In terms of biological role, catalyzes the 1,3-allylic rearrangement of the homoallylic substrate isopentenyl (IPP) to its highly electrophilic allylic isomer, dimethylallyl diphosphate (DMAPP). In Mycolicibacterium vanbaalenii (strain DSM 7251 / JCM 13017 / BCRC 16820 / KCTC 9966 / NRRL B-24157 / PYR-1) (Mycobacterium vanbaalenii), this protein is Isopentenyl-diphosphate Delta-isomerase.